The sequence spans 201 residues: Holliday junction branch migration complex subunit RuvA (201 aa).

Residues 1–64 (MIGRLRGELV…EDAHVLYGFA (64 aa)) are domain I. The tract at residues 65-143 (SESERALFRS…SLPAAVTLTG (79 aa)) is domain II. A flexible linker region spans residues 144 to 153 (GKPAAAAARA). The tract at residues 153-201 (APDPVSDAVSALVSLGYKPQEASRLISAVEGEAERSEDLIRLALKATLK) is domain III.

It belongs to the RuvA family. In terms of assembly, homotetramer. Forms an RuvA(8)-RuvB(12)-Holliday junction (HJ) complex. HJ DNA is sandwiched between 2 RuvA tetramers; dsDNA enters through RuvA and exits via RuvB. An RuvB hexamer assembles on each DNA strand where it exits the tetramer. Each RuvB hexamer is contacted by two RuvA subunits (via domain III) on 2 adjacent RuvB subunits; this complex drives branch migration. In the full resolvosome a probable DNA-RuvA(4)-RuvB(12)-RuvC(2) complex forms which resolves the HJ.

It localises to the cytoplasm. Its function is as follows. The RuvA-RuvB-RuvC complex processes Holliday junction (HJ) DNA during genetic recombination and DNA repair, while the RuvA-RuvB complex plays an important role in the rescue of blocked DNA replication forks via replication fork reversal (RFR). RuvA specifically binds to HJ cruciform DNA, conferring on it an open structure. The RuvB hexamer acts as an ATP-dependent pump, pulling dsDNA into and through the RuvAB complex. HJ branch migration allows RuvC to scan DNA until it finds its consensus sequence, where it cleaves and resolves the cruciform DNA. The sequence is that of Holliday junction branch migration complex subunit RuvA from Thioalkalivibrio sulfidiphilus (strain HL-EbGR7).